The primary structure comprises 230 residues: Orotidine 5'-phosphate decarboxylase (230 aa).

Residues D11, K34, 61-70 (DLKLHDIPNT), T117, R179, Q188, G208, and R209 each bind substrate. Catalysis depends on K63, which acts as the Proton donor.

Belongs to the OMP decarboxylase family. Type 1 subfamily. In terms of assembly, homodimer.

The catalysed reaction is orotidine 5'-phosphate + H(+) = UMP + CO2. It participates in pyrimidine metabolism; UMP biosynthesis via de novo pathway; UMP from orotate: step 2/2. Its function is as follows. Catalyzes the decarboxylation of orotidine 5'-monophosphate (OMP) to uridine 5'-monophosphate (UMP). The protein is Orotidine 5'-phosphate decarboxylase of Streptococcus sanguinis (strain SK36).